The sequence spans 862 residues: MKTVLMVAEKPSLAQSIAKILSRGSLSSHKGLNGACSVHEYTGTFAGQPVRFKMTSVCGHVMTLDFLGKYNKWDKVDPAELFSQAPTEKKEANPKLNMVKFLQVEGRGCDYIVLWLDCDKEGENICFEVLDAVLPVMNKAHGGEKTVFRARFSSITDTDICNAMACLGEPDHNEALSVDARQELDLRIGCAFTRFQTKYFQGKYGDLDSSLISFGPCQTPTLGFCVERHDKIQSFKPETYWVLQAKVNTDKDRSLLLDWDRVRVFDREIAQMFLNMTKLEKEAQVEATSRKEKAKQRPLALNTVEMLRVASSSLGMGPQHAMQTAERLYTQGYISYPRTETTHYPENFDLKGSLRQQANHPYWADTVKRLLAEGINRPRKGHDAGDHPPITPMKSATEAELGGDAWRLYEYITRHFIATVSHDCKYLQSTISFRIGPELFTCSGKTVLSPGFTEVMPWQSVPLEESLPTCQRGDAFPVGEVKMLEKQTNPPDYLTEAELITLMEKHGIGTDASIPVHINNICQRNYVTVESGRRLKPTNLGIVLVHGYYKIDAELVLPTIRSAVEKQLNLIAQGKADYRQVLGHTLDVFKRKFHYFVDSIAGMDELMEVSFSPLAATGKPLSRCGKCHRFMKYIQAKPSRLHCSHCDETYTLPQNGTIKLYKELRCPLDDFELVLWSSGSRGKSYPLCPYCYNHPPFRDMKKGMGCNECTHPSCQHSLSMLGIGQCVECESGVLVLDPTSGPKWKVACNKCNVVAHCFENAHRVRVSADTCSVCEAALLDVDFNKAKSPLPGDETQHMGCVFCDPVFQELVELKHAASCHPMHRGGPGRRQGRGRGRARRPPGKPNPRRPKDKMSALAAYFV.

The region spanning 3–153 (TVLMVAEKPS…EKTVFRARFS (151 aa)) is the Toprim domain. A Topo IA-type catalytic domain is found at 171–593 (DHNEALSVDA…HTLDVFKRKF (423 aa)). Tyrosine 336 functions as the O-(5'-phospho-DNA)-tyrosine intermediate in the catalytic mechanism. Residues 821–851 (PMHRGGPGRRQGRGRGRARRPPGKPNPRRPK) are compositionally biased toward basic residues. The segment at 821-854 (PMHRGGPGRRQGRGRGRARRPPGKPNPRRPKDKM) is disordered.

The protein belongs to the type IA topoisomerase family. Isoform 1 is found in testis, heart and skeletal muscle. A 4 kb transcript which probably represents isoform 2 is found in thymus, kidney and pancreas.

The catalysed reaction is ATP-independent breakage of single-stranded DNA, followed by passage and rejoining.. Releases the supercoiling and torsional tension of DNA introduced during the DNA replication and transcription by transiently cleaving and rejoining one strand of the DNA duplex. Introduces a single-strand break via transesterification at a target site in duplex DNA. The scissile phosphodiester is attacked by the catalytic tyrosine of the enzyme, resulting in the formation of a DNA-(5'-phosphotyrosyl)-enzyme intermediate and the expulsion of a 3'-OH DNA strand. The free DNA strand than undergoes passage around the unbroken strand thus removing DNA supercoils. Finally, in the religation step, the DNA 3'-OH attacks the covalent intermediate to expel the active-site tyrosine and restore the DNA phosphodiester backbone. Possesses negatively supercoiled DNA relaxing activity. In Homo sapiens (Human), this protein is DNA topoisomerase 3-beta-1 (TOP3B).